The chain runs to 272 residues: Ribosomal RNA small subunit methyltransferase A (272 aa).

Residues Asn-20, Leu-22, Gly-47, Glu-68, Asp-93, and Asn-114 each coordinate S-adenosyl-L-methionine.

Belongs to the class I-like SAM-binding methyltransferase superfamily. rRNA adenine N(6)-methyltransferase family. RsmA subfamily.

It localises to the cytoplasm. It carries out the reaction adenosine(1518)/adenosine(1519) in 16S rRNA + 4 S-adenosyl-L-methionine = N(6)-dimethyladenosine(1518)/N(6)-dimethyladenosine(1519) in 16S rRNA + 4 S-adenosyl-L-homocysteine + 4 H(+). In terms of biological role, specifically dimethylates two adjacent adenosines (A1518 and A1519) in the loop of a conserved hairpin near the 3'-end of 16S rRNA in the 30S particle. May play a critical role in biogenesis of 30S subunits. The sequence is that of Ribosomal RNA small subunit methyltransferase A from Aliivibrio fischeri (strain ATCC 700601 / ES114) (Vibrio fischeri).